Consider the following 151-residue polypeptide: Epigen (151 aa).

Positions Met1–Ser18 are cleaved as a signal peptide. At Glu19–Arg108 the chain is on the extracellular side. Asn39 is a glycosylation site (N-linked (GlcNAc...) asparagine). Residues Leu54–Glu94 form the EGF-like domain. Cystine bridges form between Cys58/Cys71, Cys66/Cys82, and Cys84/Cys93. The chain crosses the membrane as a helical span at residues Tyr109–Cys129. Residues Tyr130–Leu151 lie on the Cytoplasmic side of the membrane.

The protein resides in the membrane. Functionally, promotes the growth of epithelial cells. This chain is Epigen (EPGN), found in Gallus gallus (Chicken).